The following is a 202-amino-acid chain: Large ribosomal subunit protein bL25 (202 aa).

Belongs to the bacterial ribosomal protein bL25 family. CTC subfamily. As to quaternary structure, part of the 50S ribosomal subunit; part of the 5S rRNA/L5/L18/L25 subcomplex. Contacts the 5S rRNA. Binds to the 5S rRNA independently of L5 and L18.

Functionally, this is one of the proteins that binds to the 5S RNA in the ribosome where it forms part of the central protuberance. This chain is Large ribosomal subunit protein bL25, found in Corynebacterium efficiens (strain DSM 44549 / YS-314 / AJ 12310 / JCM 11189 / NBRC 100395).